The chain runs to 581 residues: Arginine--tRNA ligase (581 aa).

The short motif at Pro122 to His132 is the 'HIGH' region element.

Belongs to the class-I aminoacyl-tRNA synthetase family. Monomer.

It is found in the cytoplasm. It carries out the reaction tRNA(Arg) + L-arginine + ATP = L-arginyl-tRNA(Arg) + AMP + diphosphate. The polypeptide is Arginine--tRNA ligase (Francisella tularensis subsp. tularensis (strain WY96-3418)).